We begin with the raw amino-acid sequence, 899 residues long: Tubulin glycylase 3F (899 aa).

One can recognise a TTL domain in the interval 471–835 (FKDVIQIIKN…TEYYQIQNWK (365 aa)). Residues 642 to 645 (QKYI), Lys-663, and Asp-665 contribute to the ATP site.

It is found in the cytoplasm. It localises to the cytoskeleton. The protein localises to the cilium basal body. Functionally, probable glycylase which modifies tubulin, generating side chains of glycine on the gamma-carboxyl groups of specific glutamate residues within the C-terminal tail of tubulin. The polypeptide is Tubulin glycylase 3F (TTLL3F) (Tetrahymena thermophila (strain SB210)).